Reading from the N-terminus, the 80-residue chain is Phosphoribosylformylglycinamidine synthase subunit PurS (80 aa).

This sequence belongs to the PurS family. As to quaternary structure, homodimer. Part of the FGAM synthase complex composed of 1 PurL, 1 PurQ and 2 PurS subunits.

The protein resides in the cytoplasm. The catalysed reaction is N(2)-formyl-N(1)-(5-phospho-beta-D-ribosyl)glycinamide + L-glutamine + ATP + H2O = 2-formamido-N(1)-(5-O-phospho-beta-D-ribosyl)acetamidine + L-glutamate + ADP + phosphate + H(+). It functions in the pathway purine metabolism; IMP biosynthesis via de novo pathway; 5-amino-1-(5-phospho-D-ribosyl)imidazole from N(2)-formyl-N(1)-(5-phospho-D-ribosyl)glycinamide: step 1/2. Part of the phosphoribosylformylglycinamidine synthase complex involved in the purines biosynthetic pathway. Catalyzes the ATP-dependent conversion of formylglycinamide ribonucleotide (FGAR) and glutamine to yield formylglycinamidine ribonucleotide (FGAM) and glutamate. The FGAM synthase complex is composed of three subunits. PurQ produces an ammonia molecule by converting glutamine to glutamate. PurL transfers the ammonia molecule to FGAR to form FGAM in an ATP-dependent manner. PurS interacts with PurQ and PurL and is thought to assist in the transfer of the ammonia molecule from PurQ to PurL. The sequence is that of Phosphoribosylformylglycinamidine synthase subunit PurS from Archaeoglobus fulgidus (strain ATCC 49558 / DSM 4304 / JCM 9628 / NBRC 100126 / VC-16).